Consider the following 147-residue polypeptide: MRTFTPKPGDINRRWLVIDAEDVVLGRLASQTAILLRGKHKATYAPHVDGGDYVIIVNAAKVALTGSKRDQKVAYRHSGYPGGLKATSYVDLLEQNPEKAVEKAIRGMIPKNSLGRQVLSKLKVYAGAEHPHAAQQPEAYTIHQVAQ.

Belongs to the universal ribosomal protein uL13 family. Part of the 50S ribosomal subunit.

This protein is one of the early assembly proteins of the 50S ribosomal subunit, although it is not seen to bind rRNA by itself. It is important during the early stages of 50S assembly. The protein is Large ribosomal subunit protein uL13 of Kineococcus radiotolerans (strain ATCC BAA-149 / DSM 14245 / SRS30216).